Here is a 762-residue protein sequence, read N- to C-terminus: MSVAETEEGVFEATATIDNGSFGTRTIRFETGRLAQQAAGSVVGYLDDENMLLSATTASKNPKEHFNFFPLTVDVEERMYAAGRIPGSFFRREGRPSTDAILTCRLIDRPLRPSFVNGLRNEIQVVVTILSLDPNDLYDVVAINAASASTQLAGLPFSGPVGGVRVALIDGQWVAFPNVEQLERAVFDMVVAGRIVGTEEDGTPDVAIMMVEAEATDKVIELVEGGAPAPTESVVAQGLEAAKPFIAALCTAQQELADASGATVKTGAEYPVFPEYGDDVYYAVSSVATDGLAAALTIGGKAERNQRTEEIKAEVLERLADTYEGREKEIGAAFRSLTKKLVRQRIVTDHFRIDGRGVTDIRALSAEVALVPRAHGSALFERGETQILGVTTLDMVKMAQQIDSLGPETTKRYMHHYNFPPFSTGETGRVGSPKRREIGHGALAERALMPVLPSVEEFPYAIRQVSEALGSNGSTSMGSVCASTLALLNAGVPLKAPVAGIAMGLVSDDVEVDGKTERRFVTLTDILGAEDAFGDMDFKVAGTKDFVTALQLDTKLDGIPSQVLAGALAQAKDARLTILEVMAEAIDTPDEMSPYAPRVTTIKVPVDKIGEVIGPKGKVINSITEETRAQISIEDDGTVFVGATDGPSAQAAIDKINAIANPQLPTVGERFLGTVVKTTDFGAFVALLPGRDGLVHISKLGKGKRIAKVEDVVNVGDKLRVEIADIDKRGKISLVLVAEDDDSAAAAAADSPAPADAATASS.

Residues Asp-531 and Asp-537 each coordinate Mg(2+). The region spanning 597 to 656 (PRVTTIKVPVDKIGEVIGPKGKVINSITEETRAQISIEDDGTVFVGATDGPSAQAAIDKI) is the KH domain. Residues 668–737 (GERFLGTVVK…KRGKISLVLV (70 aa)) form the S1 motif domain.

It belongs to the polyribonucleotide nucleotidyltransferase family. Mg(2+) is required as a cofactor.

It localises to the cytoplasm. The enzyme catalyses RNA(n+1) + phosphate = RNA(n) + a ribonucleoside 5'-diphosphate. In terms of biological role, involved in mRNA degradation. Catalyzes the phosphorolysis of single-stranded polyribonucleotides processively in the 3'- to 5'-direction. The polypeptide is Polyribonucleotide nucleotidyltransferase (Mycobacterium ulcerans (strain Agy99)).